We begin with the raw amino-acid sequence, 853 residues long: Envelope glycoprotein gp160 (853 aa).

A signal peptide spans 1–31 (MRVRGIERNCQNLWKWGIMLLGILMTCSNAD). Topologically, residues 32-681 (NLWVTVYYGV…ITQWLWYIKI (650 aa)) are extracellular. An intrachain disulfide couples Cys-53 to Cys-73. Asn-87, Asn-137, Asn-144, Asn-153, Asn-157, Asn-185, Asn-188, Asn-198, Asn-235, Asn-242, Asn-263, Asn-277, Asn-290, and Asn-296 each carry an N-linked (GlcNAc...) asparagine; by host glycan. 5 disulfides stabilise this stretch: Cys-118–Cys-206, Cys-125–Cys-197, Cys-130–Cys-154, Cys-219–Cys-248, and Cys-229–Cys-240. Residues 130-153 (CIDEVMENVTMKNNNVTEEIRMKN) are V1. The tract at residues 154 to 197 (CSFNITTVVRDKTKQVHALFYRLDIVPIDNDNSTNSTNYRLINC) is V2. The V3 stretch occupies residues 297-329 (CTRPYRNIRQRTSIGLGQALYTTKTRSIIGQAY). An intrachain disulfide couples Cys-297 to Cys-330. 3 N-linked (GlcNAc...) asparagine; by host glycosylation sites follow: Asn-331, Asn-338, and Asn-353. Positions 362–372 (SSGGDPEITTH) are CD4-binding loop. 2 disulfides stabilise this stretch: Cys-376/Cys-442 and Cys-383/Cys-415. A V4 region spans residues 383 to 415 (CNTSGLFNSTWDISKSEWANSTESDDKPITLQC). 8 N-linked (GlcNAc...) asparagine; by host glycosylation sites follow: Asn-384, Asn-390, Asn-402, Asn-441, Asn-445, Asn-458, Asn-459, and Asn-462. V5 regions lie at residues 457–468 (TNNSSNETFRPG) and 460–468 (SSNETFRPG). Residues 509 to 529 (AIGLGAMFLGFLGAAGSTMGA) are fusion peptide. Residues 571 to 589 (KQLQARILAVERYLKDQQL) are immunosuppression. A disulfide bridge links Cys-595 with Cys-601. Asn-608, Asn-613, Asn-622, Asn-634, and Asn-671 each carry an N-linked (GlcNAc...) asparagine; by host glycan. Positions 630–664 (REIDNYTGLIYRLIEESQTQQEKNEQELLELDKWA) form a coiled coil. Positions 659-680 (ELDKWASLWNWFNITQWLWYIK) are MPER; binding to GalCer. The helical transmembrane segment at 682–702 (FIMIVGGLIGLRIVFAVLSLV) threads the bilayer. The Cytoplasmic segment spans residues 703–853 (NRVRQGYSPL…IRQGLERLLL (151 aa)). A YXXL motif; contains endocytosis signal motif is present at residues 709-712 (YSPL). Residues Cys-761 and Cys-834 are each lipidated (S-palmitoyl cysteine; by host). Positions 852–853 (LL) match the Di-leucine internalization motif motif.

Belongs to the HIV-1 env protein family. As to quaternary structure, the mature envelope protein (Env) consists of a homotrimer of non-covalently associated gp120-gp41 heterodimers. The resulting complex protrudes from the virus surface as a spike. There seems to be as few as 10 spikes on the average virion. Interacts with host CD4, CCR5 and CXCR4. Gp120 also interacts with the C-type lectins CD209/DC-SIGN and CLEC4M/DC-SIGNR (collectively referred to as DC-SIGN(R)). Gp120 and gp41 interact with GalCer. Gp120 interacts with host ITGA4/ITGB7 complex; on CD4+ T-cells, this interaction results in rapid activation of integrin ITGAL/LFA-1, which facilitates efficient cell-to-cell spreading of HIV-1. Gp120 interacts with cell-associated heparan sulfate; this interaction increases virus infectivity on permissive cells and may be involved in infection of CD4- cells. In terms of assembly, the mature envelope protein (Env) consists of a homotrimer of non-covalently associated gp120-gp41 heterodimers. The resulting complex protrudes from the virus surface as a spike. There seems to be as few as 10 spikes on the average virion. In terms of processing, highly glycosylated by host. The high number of glycan on the protein is reffered to as 'glycan shield' because it contributes to hide protein sequence from adaptive immune system. Post-translationally, palmitoylation of the transmembrane protein and of Env polyprotein (prior to its proteolytic cleavage) is essential for their association with host cell membrane lipid rafts. Palmitoylation is therefore required for envelope trafficking to classical lipid rafts, but not for viral replication. Specific enzymatic cleavages in vivo yield mature proteins. Envelope glycoproteins are synthesized as an inactive precursor that is heavily N-glycosylated and processed likely by host cell furin in the Golgi to yield the mature SU and TM proteins. The cleavage site between SU and TM requires the minimal sequence [KR]-X-[KR]-R. About 2 of the 9 disulfide bonds of gp41 are reduced by P4HB/PDI, following binding to CD4 receptor.

It is found in the virion membrane. The protein localises to the host cell membrane. Its subcellular location is the host endosome membrane. Functionally, oligomerizes in the host endoplasmic reticulum into predominantly trimers. In a second time, gp160 transits in the host Golgi, where glycosylation is completed. The precursor is then proteolytically cleaved in the trans-Golgi and thereby activated by cellular furin or furin-like proteases to produce gp120 and gp41. Its function is as follows. Attaches the virus to the host lymphoid cell by binding to the primary receptor CD4. This interaction induces a structural rearrangement creating a high affinity binding site for a chemokine coreceptor like CXCR4 and/or CCR5. Acts as a ligand for CD209/DC-SIGN and CLEC4M/DC-SIGNR, which are respectively found on dendritic cells (DCs), and on endothelial cells of liver sinusoids and lymph node sinuses. These interactions allow capture of viral particles at mucosal surfaces by these cells and subsequent transmission to permissive cells. HIV subverts the migration properties of dendritic cells to gain access to CD4+ T-cells in lymph nodes. Virus transmission to permissive T-cells occurs either in trans (without DCs infection, through viral capture and transmission), or in cis (following DCs productive infection, through the usual CD4-gp120 interaction), thereby inducing a robust infection. In trans infection, bound virions remain infectious over days and it is proposed that they are not degraded, but protected in non-lysosomal acidic organelles within the DCs close to the cell membrane thus contributing to the viral infectious potential during DCs' migration from the periphery to the lymphoid tissues. On arrival at lymphoid tissues, intact virions recycle back to DCs' cell surface allowing virus transmission to CD4+ T-cells. In terms of biological role, acts as a class I viral fusion protein. Under the current model, the protein has at least 3 conformational states: pre-fusion native state, pre-hairpin intermediate state, and post-fusion hairpin state. During fusion of viral and target intracellular membranes, the coiled coil regions (heptad repeats) assume a trimer-of-hairpins structure, positioning the fusion peptide in close proximity to the C-terminal region of the ectodomain. The formation of this structure appears to drive apposition and subsequent fusion of viral and target cell membranes. Complete fusion occurs in host cell endosomes and is dynamin-dependent, however some lipid transfer might occur at the plasma membrane. The virus undergoes clathrin-dependent internalization long before endosomal fusion, thus minimizing the surface exposure of conserved viral epitopes during fusion and reducing the efficacy of inhibitors targeting these epitopes. Membranes fusion leads to delivery of the nucleocapsid into the cytoplasm. The chain is Envelope glycoprotein gp160 from Homo sapiens (Human).